A 957-amino-acid polypeptide reads, in one-letter code: UvrABC system protein A (957 aa).

33–40 (GLSGSGKS) contributes to the ATP binding site. Residues 252–279 (CPHCGFSIGELEPRLFSFNSPFGACPTC) form a C4-type zinc finger. 2 consecutive ABC transporter domains span residues 309 to 587 (WTPI…PNSL) and 607 to 935 (PDGR…RYLK). 639 to 646 (GVSGSGKS) is an ATP binding site. The segment at 738-764 (CEACRGDGIIKIEMHFLPDVYVPCEVC) adopts a C4-type zinc-finger fold.

The protein belongs to the ABC transporter superfamily. UvrA family. Forms a heterotetramer with UvrB during the search for lesions.

The protein resides in the cytoplasm. The UvrABC repair system catalyzes the recognition and processing of DNA lesions. UvrA is an ATPase and a DNA-binding protein. A damage recognition complex composed of 2 UvrA and 2 UvrB subunits scans DNA for abnormalities. When the presence of a lesion has been verified by UvrB, the UvrA molecules dissociate. The protein is UvrABC system protein A of Bacillus subtilis (strain 168).